The sequence spans 333 residues: Chlorophyllide reductase 35.5 kDa chain (333 aa).

The disordered stretch occupies residues 1–22 (MTDAPNLKGFDARLREEAAEEP). ATP is bound by residues 45–50 (GSGKSF) and Lys-74. Mg(2+) is bound at residue Ser-49. [4Fe-4S] cluster is bound by residues Cys-130 and Cys-165. Position 219-220 (219-220 (NK)) interacts with ATP.

The protein belongs to the NifH/BchL/ChlL family. As to quaternary structure, homodimer. Chlorophyllide reductase is composed of three subunits; BchX, BchY and BchZ. It depends on [4Fe-4S] cluster as a cofactor.

The catalysed reaction is 3-deacetyl-3-vinylbacteriochlorophyllide a + 2 oxidized [2Fe-2S]-[ferredoxin] + ADP + phosphate = chlorophyllide a + 2 reduced [2Fe-2S]-[ferredoxin] + ATP + H2O + H(+). It catalyses the reaction bacteriochlorophyllide a + 2 oxidized [2Fe-2S]-[ferredoxin] + ADP + phosphate = 3-acetyl-3-devinylchlorophyllide a + 2 reduced [2Fe-2S]-[ferredoxin] + ATP + H2O + H(+). The enzyme catalyses 3-deacetyl-3-(1-hydroxyethyl)bacteriochlorophyllide a + 2 oxidized [2Fe-2S]-[ferredoxin] + ADP + phosphate = 3-devinyl-3-(1-hydroxyethyl)chlorophyllide a + 2 reduced [2Fe-2S]-[ferredoxin] + ATP + H2O + H(+). The protein operates within porphyrin-containing compound metabolism; bacteriochlorophyll biosynthesis. Converts chlorophylls (Chl) into bacteriochlorophylls (BChl) by reducing ring B of the tetrapyrrole. This Rhodobacter capsulatus (strain ATCC BAA-309 / NBRC 16581 / SB1003) protein is Chlorophyllide reductase 35.5 kDa chain (bchX).